The following is a 69-amino-acid chain: Conotoxin Cal12.1p4 (69 aa).

A propeptide spanning residues 1 to 23 (DLITNSYTRGKPRHVTSWRNLKT) is cleaved from the precursor.

Post-translationally, contains 4 disulfide bonds. In terms of tissue distribution, expressed by the venom duct.

The protein resides in the secreted. The chain is Conotoxin Cal12.1p4 from Californiconus californicus (California cone).